The primary structure comprises 356 residues: 45 kDa calcium-binding protein (356 aa).

Positions 1–29 (MMSRQAFLCSLGSLYLSLLFVFLLMDVYA) are cleaved as a signal peptide. An N-linked (GlcNAc...) asparagine glycan is attached at Asn33. EF-hand domains follow at residues 92–127 (KNRK…KTDE), 131–166 (EAVE…SKGL), 227–262 (MLKF…TVEN), 272–307 (WVKD…MNEY), and 308–343 (NALN…FTGS). Ca(2+) contacts are provided by Asp105, Asp107, Asp109, Lys111, Glu116, Asp144, Asp146, Asp148, His150, Glu155, Asp240, Asp242, Asp244, Lys246, Glu251, Asp285, Asn287, Asp289, Glu296, Asp321, Asn323, Asn325, His327, and Glu332.

It belongs to the CREC family.

Its subcellular location is the golgi apparatus lumen. In terms of biological role, may regulate calcium-dependent activities in the endoplasmic reticulum lumen or post-ER compartment. The chain is 45 kDa calcium-binding protein (SDF4) from Gallus gallus (Chicken).